An 85-amino-acid polypeptide reads, in one-letter code: ATP synthase subunit c (85 aa).

The next 2 helical transmembrane spans lie at 10–30 (IAVA…FGLL) and 53–73 (FIVA…ALFF).

It belongs to the ATPase C chain family. In terms of assembly, F-type ATPases have 2 components, F(1) - the catalytic core - and F(0) - the membrane proton channel. F(1) has five subunits: alpha(3), beta(3), gamma(1), delta(1), epsilon(1). F(0) has three main subunits: a(1), b(2) and c(10-14). The alpha and beta chains form an alternating ring which encloses part of the gamma chain. F(1) is attached to F(0) by a central stalk formed by the gamma and epsilon chains, while a peripheral stalk is formed by the delta and b chains.

The protein localises to the cell inner membrane. Functionally, f(1)F(0) ATP synthase produces ATP from ADP in the presence of a proton or sodium gradient. F-type ATPases consist of two structural domains, F(1) containing the extramembraneous catalytic core and F(0) containing the membrane proton channel, linked together by a central stalk and a peripheral stalk. During catalysis, ATP synthesis in the catalytic domain of F(1) is coupled via a rotary mechanism of the central stalk subunits to proton translocation. Its function is as follows. Key component of the F(0) channel; it plays a direct role in translocation across the membrane. A homomeric c-ring of between 10-14 subunits forms the central stalk rotor element with the F(1) delta and epsilon subunits. The chain is ATP synthase subunit c from Pseudomonas aeruginosa (strain LESB58).